The primary structure comprises 243 residues: MSNLSAEGFQRCFVLHRRPYSESSLILDVFSEEYGRITLMAKGARSKRSNLKGALQPFTPLLLKWSGKGSMKTLRQAEPISLGLPLFGINLYSAMYVNELVGRVLMAEVPMPALFHDYLHALTELAQCENPEPALRRFELALLSSMGYGVDFLHCAGTGEPVDPEMTYRYREQKGFIASVRRDNLTFLGNELIAISERRFVTKEQLKAAKRFTRIALKPYLGGKPLKSRELFIQTPRARSNGK.

Belongs to the RecO family.

In terms of biological role, involved in DNA repair and RecF pathway recombination. This chain is DNA repair protein RecO, found in Vibrio parahaemolyticus serotype O3:K6 (strain RIMD 2210633).